A 468-amino-acid polypeptide reads, in one-letter code: MSYVIAAPEMLATTAADVDGIGSAIRAASASAAGPTTGLLAAAADEVSSAAAALFSEYARECQEVLKQAAAFHGEFTRALAAAGAAYAQAEASNTAAMSGTAGSSGALGSVGMLSGNPLTALMMGGTGEPILSDRVLAIIDSAYIRPIFGPNNPVAQYTPEQWWPFIGNLSLDQSIAQGVTLLNNGINAELQNGHDVVVFGYSQSAAVATNEIRALMALPPGQAPDPSRLAFTLIGNINNPNGGVLERYVGLYLPFLDMSFNGATPPDSPYQTYMYTGQYDGYAHNPQYPLNILSDLNAFMGIRWVHNAYPFTAAEVANAVPLPTSPGYTGNTHYYMFLTQDLPLLQPIRAIPFVGTPIAELIQPDLRVLVDLGYGYGYADVPTPASLFAPINPIAVASALATGTVQGPQAALVSIGLLPQSALPNTYPYLPSANPGLMFNFGQSSVTELSVLSGALGSVARLIPPIA.

Residues 1 to 92 form the PE domain; that stretch reads MSYVIAAPEM…AGAAYAQAEA (92 aa). A PE-PPE domain is found at 154 to 375; it reads PVAQYTPEQW…DLRVLVDLGY (222 aa).

It belongs to the mycobacterial PE family.

It localises to the secreted. Its subcellular location is the cell wall. Functionally, plays significant roles in mycobacterial persistence during infection and modulates host immune response. This chain is PE family protein PE3, found in Mycobacterium tuberculosis (strain ATCC 25618 / H37Rv).